A 169-amino-acid polypeptide reads, in one-letter code: Cell division inhibitor SulA (169 aa).

A compositionally biased stretch (polar residues) spans 1-16 (MFTSAHANRSPLTSAS). Residues 1 to 20 (MFTSAHANRSPLTSASVRRP) form a disordered region. A ftsZ binding region spans residues 106-112 (ALRTGNY). The segment at 162–169 (KIHSNLYH) is lon protease binding.

This sequence belongs to the SulA family. In terms of assembly, interacts with FtsZ. Is rapidly cleaved and degraded by the Lon protease once DNA damage is repaired.

Functionally, component of the SOS system and an inhibitor of cell division. Accumulation of SulA causes rapid cessation of cell division and the appearance of long, non-septate filaments. In the presence of GTP, binds a polymerization-competent form of FtsZ in a 1:1 ratio, thus inhibiting FtsZ polymerization and therefore preventing it from participating in the assembly of the Z ring. This mechanism prevents the premature segregation of damaged DNA to daughter cells during cell division. The chain is Cell division inhibitor SulA from Klebsiella aerogenes (Enterobacter aerogenes).